The chain runs to 142 residues: Large ribosomal subunit protein uL13 (142 aa).

This sequence belongs to the universal ribosomal protein uL13 family. In terms of assembly, part of the 50S ribosomal subunit.

This protein is one of the early assembly proteins of the 50S ribosomal subunit, although it is not seen to bind rRNA by itself. It is important during the early stages of 50S assembly. The protein is Large ribosomal subunit protein uL13 of Haemophilus influenzae (strain PittGG).